The sequence spans 270 residues: MSILDDIIDDTRELVEQRKQETPTSELKERPFYDEREPLSLAEALKERGLSFIAEVKKASPSKGVIRDPFDPAAIAQQYAEHDAAAISVLTEPLHFEGALEHMAWIRAHVPETPLLRKDFIIDPYQLVEARAVGADAVLLIATALDPGQLAELHAAATELGLSCLVEVYEEEDLDKIDWEQVSVLGVNNRDLHTFEVDLDNSLRIFDQTPKGVGRVAESGLSDPETLVRLRKAGVNGVLIGEHLMRAEHPGEALSRLRAEGKKIAAQQAG.

This sequence belongs to the TrpC family.

The catalysed reaction is 1-(2-carboxyphenylamino)-1-deoxy-D-ribulose 5-phosphate + H(+) = (1S,2R)-1-C-(indol-3-yl)glycerol 3-phosphate + CO2 + H2O. It participates in amino-acid biosynthesis; L-tryptophan biosynthesis; L-tryptophan from chorismate: step 4/5. This is Indole-3-glycerol phosphate synthase from Salinibacter ruber (strain DSM 13855 / M31).